A 119-amino-acid chain; its full sequence is MPRVKTGIVRRRRHKKVLKRAKGFWGSRSKQYRNAFQTLLNAATYEYRDRRNKKRDFRRLWIQRINAGARLHGMNYSTFINGLKVAGVDLNRKVLADIAAREPEAFQVLVNTAKGARNG.

This sequence belongs to the bacterial ribosomal protein bL20 family.

Its function is as follows. Binds directly to 23S ribosomal RNA and is necessary for the in vitro assembly process of the 50S ribosomal subunit. It is not involved in the protein synthesizing functions of that subunit. In Deinococcus geothermalis (strain DSM 11300 / CIP 105573 / AG-3a), this protein is Large ribosomal subunit protein bL20.